Here is a 729-residue protein sequence, read N- to C-terminus: Phosphoribosylformylglycinamidine synthase subunit PurL (729 aa).

The active site involves histidine 42. The ATP site is built by tyrosine 45 and lysine 84. Glutamate 86 contacts Mg(2+). Substrate is bound by residues 87–90 (SHNH) and arginine 109. Histidine 88 acts as the Proton acceptor in catalysis. Aspartate 110 lines the Mg(2+) pocket. Glutamine 238 contacts substrate. Residue aspartate 266 coordinates Mg(2+). Residue 310 to 312 (ESQ) coordinates substrate. Residues aspartate 492 and glycine 529 each contribute to the ATP site. Residue asparagine 530 participates in Mg(2+) binding. Serine 532 is a binding site for substrate.

This sequence belongs to the FGAMS family. Monomer. Part of the FGAM synthase complex composed of 1 PurL, 1 PurQ and 2 PurS subunits.

The protein localises to the cytoplasm. The catalysed reaction is N(2)-formyl-N(1)-(5-phospho-beta-D-ribosyl)glycinamide + L-glutamine + ATP + H2O = 2-formamido-N(1)-(5-O-phospho-beta-D-ribosyl)acetamidine + L-glutamate + ADP + phosphate + H(+). It functions in the pathway purine metabolism; IMP biosynthesis via de novo pathway; 5-amino-1-(5-phospho-D-ribosyl)imidazole from N(2)-formyl-N(1)-(5-phospho-D-ribosyl)glycinamide: step 1/2. Its function is as follows. Part of the phosphoribosylformylglycinamidine synthase complex involved in the purines biosynthetic pathway. Catalyzes the ATP-dependent conversion of formylglycinamide ribonucleotide (FGAR) and glutamine to yield formylglycinamidine ribonucleotide (FGAM) and glutamate. The FGAM synthase complex is composed of three subunits. PurQ produces an ammonia molecule by converting glutamine to glutamate. PurL transfers the ammonia molecule to FGAR to form FGAM in an ATP-dependent manner. PurS interacts with PurQ and PurL and is thought to assist in the transfer of the ammonia molecule from PurQ to PurL. The polypeptide is Phosphoribosylformylglycinamidine synthase subunit PurL (Campylobacter curvus (strain 525.92)).